A 429-amino-acid chain; its full sequence is TNF receptor-associated factor family protein DDB_G0267744 (429 aa).

An RING-type; degenerate zinc finger spans residues Cys-22–Arg-60. TRAF-type zinc fingers lie at residues His-151 to Asn-203 and Asn-204 to Glu-265.

It belongs to the TNF receptor-associated factor family.

The protein resides in the cytoplasm. Functionally, probable adapter protein and signal transducer that links members of the tumor necrosis factor receptor family to different signaling pathways by association with the receptor cytoplasmic domain and kinases. The chain is TNF receptor-associated factor family protein DDB_G0267744 from Dictyostelium discoideum (Social amoeba).